The chain runs to 166 residues: UPF0304 protein VP0990 (166 aa).

The protein belongs to the UPF0304 family.

The protein is UPF0304 protein VP0990 of Vibrio parahaemolyticus serotype O3:K6 (strain RIMD 2210633).